The primary structure comprises 405 residues: Metallophosphoesterase 1 (405 aa).

A helical transmembrane segment spans residues 31 to 51; sequence IFGSILLVFFFCEFLVYYLVI. Residues Asp78, Asp120, Asn158, His261, His315, and His317 each coordinate a divalent metal cation. Residues 369 to 389 traverse the membrane as a helical segment; the sequence is IIYIYCTASVLLTGYVLACLW.

It belongs to the metallophosphoesterase superfamily. MPPE1 family. Requires Mn(2+) as cofactor.

The protein resides in the endoplasmic reticulum-Golgi intermediate compartment membrane. Functionally, metallophosphoesterase that catalyzes the removal of a side-chain ethanolamine-phosphate (EtNP) from the second mannose of the GPI-anchor protein intermediate. Participates in the glycan remodeling steps of GPI-anchor maturation to allow an efficient transport of GPI-anchor proteins from the endoplasmic reticulum to the Golgi. The protein is Metallophosphoesterase 1 of Xenopus laevis (African clawed frog).